We begin with the raw amino-acid sequence, 181 residues long: SecB-like chaperone MT2006 (181 aa).

It belongs to the SecB-like family. As to quaternary structure, homotetramer, interacts with antitoxin HigA1.

Chaperone component of an atypical, type II toxin-antitoxin chaperone (TAC) module, probably required for antitoxin HigA1 to neutralize its cognate toxin HigB1. The polypeptide is SecB-like chaperone MT2006 (secBL) (Mycobacterium tuberculosis (strain CDC 1551 / Oshkosh)).